The primary structure comprises 334 residues: tRNA uridine(34) hydroxylase (334 aa).

The Rhodanese domain occupies 123–217 (SDPDVILVDT…YLEEVKQEES (95 aa)). Cysteine 177 (cysteine persulfide intermediate) is an active-site residue.

The protein belongs to the TrhO family.

It carries out the reaction uridine(34) in tRNA + AH2 + O2 = 5-hydroxyuridine(34) in tRNA + A + H2O. Functionally, catalyzes oxygen-dependent 5-hydroxyuridine (ho5U) modification at position 34 in tRNAs. The polypeptide is tRNA uridine(34) hydroxylase (Shewanella putrefaciens (strain CN-32 / ATCC BAA-453)).